The sequence spans 147 residues: Myoglobin (147 aa).

Positions Ala-2–Glu-137 constitute a Globin domain. A nitrite-binding site is contributed by His-60. His-60 provides a ligand contact to O2. His-89 provides a ligand contact to heme b.

This sequence belongs to the globin family. Monomeric.

Its subcellular location is the cytoplasm. It localises to the sarcoplasm. The enzyme catalyses Fe(III)-heme b-[protein] + nitric oxide + H2O = Fe(II)-heme b-[protein] + nitrite + 2 H(+). It catalyses the reaction H2O2 + AH2 = A + 2 H2O. In terms of biological role, monomeric heme protein which primary function is to store oxygen and facilitate its diffusion within muscle tissues. Reversibly binds oxygen through a pentacoordinated heme iron and enables its timely and efficient release as needed during periods of heightened demand. Depending on the oxidative conditions of tissues and cells, and in addition to its ability to bind oxygen, it also has a nitrite reductase activity whereby it regulates the production of bioactive nitric oxide. Under stress conditions, like hypoxia and anoxia, it also protects cells against reactive oxygen species thanks to its pseudoperoxidase activity. The chain is Myoglobin (mb) from Makaira nigricans (Atlantic blue marlin).